Here is a 243-residue protein sequence, read N- to C-terminus: MSESYAKIARDGLWDKNIVTGQMLALCPTLAITGTATNGLGMGLATTVVLILSNVVISALRKTIAPEIRIPAFILIIAAIVTVVDLALNAWLHDLHKVLGLFIALIVTNCAILGRAEAFASRFGVLASALDGLMMGIGFTLALVVVGAIREILGSGTLFAQASLLLGPHFAFMELQIFPDYPGFLIMILPPGGFLVVGGLFALKRIIDARKPTIEQEIKQMRTERVFTAAGVLKPKLETGEEA.

Transmembrane regions (helical) follow at residues 40-60, 72-92, 94-114, 129-149, 152-172, and 183-203; these read LGMG…ISAL, AFIL…NAWL, DLHK…AILG, ALDG…VGAI, ILGS…HFAF, and GFLI…LFAL.

Belongs to the NqrDE/RnfAE family. As to quaternary structure, the complex is composed of six subunits: RnfA, RnfB, RnfC, RnfD, RnfE and RnfG.

It localises to the cellular chromatophore membrane. Its function is as follows. Part of a membrane-bound complex that couples electron transfer with translocation of ions across the membrane. Required for nitrogen fixation. Involved in electron transfer to nitrogenase. This Rhodobacter capsulatus (Rhodopseudomonas capsulata) protein is Ion-translocating oxidoreductase complex subunit E.